A 62-amino-acid polypeptide reads, in one-letter code: Conotoxin Mi5.2 (62 aa).

A signal peptide spans 1–19 (MRCVPVFIILLLLIPSASS). The propeptide occupies 20–50 (VDVQPLTRDDVPLASFLDDARRTLRSPWMTR).

Belongs to the conotoxin T superfamily. Post-translationally, contains 2 disulfide bonds that can be either 'C1-C3, C2-C4' or 'C1-C4, C2-C3', since these disulfide connectivities have been observed for conotoxins with cysteine framework V (for examples, see AC P0DQQ7 and AC P81755). In terms of tissue distribution, expressed by the venom duct.

It is found in the secreted. The sequence is that of Conotoxin Mi5.2 from Conus miles (Soldier cone).